The primary structure comprises 1134 residues: Ubinuclein-1 (1134 aa).

Disordered regions lie at residues 1–38 (MSEP…HQDC) and 78–98 (LQPG…EKER). The interval 1 to 166 (MSEPHRVQFT…YGGFYINSGT (166 aa)) is sufficient for interaction with HIRA. Composition is skewed to basic and acidic residues over residues 25-38 (RKEE…HQDC) and 81-98 (GDKK…EKER). T166 is subject to Phosphothreonine. The disordered stretch occupies residues 171 to 220 (QASESEDDFIKEKKKKSPKKRKLKEGGEKIKKKKKDDTYDKEKKSKKSKF). Phosphoserine is present on residues S173 and S175. Residues 182–193 (EKKKKSPKKRKL) are compositionally biased toward basic residues. The segment covering 194 to 213 (KEGGEKIKKKKKDDTYDKEK) has biased composition (basic and acidic residues). K222 is subject to N6-acetyllysine. Residues 253 to 268 (QKEKEAQKKREEEHKP) show a composition bias toward basic and acidic residues. 4 disordered regions span residues 253–282 (QKEK…LREL), 321–358 (SESP…EGLP), 480–504 (EEEK…KGGR), and 594–660 (PSKI…LEDS). S323, S336, S338, and S493 each carry phosphoserine. The stretch at 479-542 (LEEEKDKEQR…SQDLERNNKA (64 aa)) forms a coiled coil. 2 stretches are compositionally biased toward basic and acidic residues: residues 480–493 (EEEK…RICS) and 598–610 (KVKE…DKKV). Residues S660 and S677 each carry the phosphoserine modification. 2 disordered regions span residues 712 to 836 (TEEK…SPTQ) and 852 to 986 (QGFH…GVAK). Low complexity-rich tracts occupy residues 792–804 (GPQV…GPQV) and 856–891 (PSAP…KPHS). Residues 892-905 (VSSAGSSYKNNPFA) are compositionally biased toward polar residues. The span at 906 to 932 (SSISKHGVSSGSSSSGGTPVQSSVSGS) shows a compositional bias: low complexity. Over residues 941–950 (SVGQATSRPV) the composition is skewed to polar residues. Over residues 973–982 (PNGDSSGGTQ) the composition is skewed to gly residues. At S1025 the chain carries Phosphoserine. Residues 1093–1108 (GLHSSPPHAAPLPHAA) are compositionally biased toward low complexity. Positions 1093–1134 (GLHSSPPHAAPLPHAAVPTHIPQSLPGASQLHGKGPAVPRKL) are disordered.

Belongs to the ubinuclein family. As to quaternary structure, component of a complex that includes at least ASF1A, CABIN1, HIRA, histone H3.3 and UBN1. Interacts with HIRA (via WD repeat domain); the interaction is direct. Interacts with ASF1A, CEBPA, TJP1, TJP2 and TJP3. In terms of assembly, (Microbial infection) Interacts with Epstein-Barr virus BZLF1. Ubiquitous. Also expressed in numerous tumors and cancer cell lines.

It is found in the nucleus. The protein localises to the nucleoplasm. Its subcellular location is the PML body. The protein resides in the cell junction. It localises to the tight junction. Acts as a novel regulator of senescence. Involved in the formation of senescence-associated heterochromatin foci (SAHF), which represses expression of proliferation-promoting genes. Binds to proliferation-promoting genes. May be required for replication-independent chromatin assembly. The protein is Ubinuclein-1 (UBN1) of Homo sapiens (Human).